A 400-amino-acid chain; its full sequence is Enoyl-[acyl-carrier-protein] reductase [NADH] (400 aa).

NAD(+) is bound by residues 48 to 53, 74 to 75, 111 to 112, and 139 to 140; these read GASTGY, FE, DA, and LA. Tyrosine 225 provides a ligand contact to substrate. Residue tyrosine 235 is the Proton donor of the active site. Residues lysine 244 and 273–275 each bind NAD(+); that span reads VVT.

This sequence belongs to the TER reductase family. As to quaternary structure, monomer.

The enzyme catalyses a 2,3-saturated acyl-[ACP] + NAD(+) = a (2E)-enoyl-[ACP] + NADH + H(+). The protein operates within lipid metabolism; fatty acid biosynthesis. Its function is as follows. Involved in the final reduction of the elongation cycle of fatty acid synthesis (FAS II). Catalyzes the reduction of a carbon-carbon double bond in an enoyl moiety that is covalently linked to an acyl carrier protein (ACP). The chain is Enoyl-[acyl-carrier-protein] reductase [NADH] from Burkholderia ambifaria (strain MC40-6).